The following is a 1088-amino-acid chain: MKLVYTDIRNPLTQYLTEQTATFAEQGKRVFYIAPNSLSFEMERKVLEYLPEQATFDIIVTRFGQLARYLMIDRKEAGQPLDDVGLAMIFFRVLSQFEDGDLKVYGRLQTDFGFINQLVALYKELQRANMSILDLEAMDSPDKQADLVKIFLAVTDILSKEGFEHQSKLAQLTGLVETGQLDEQLKNIVLVVDGFSRFSAEEEALVSALNERVSEILIGVYASKKAVQATYAEGNVYQANVDFLRQLSAQFQTKATYIGQEPVLDSIGKFSKNMEAYYDYSGTMIDLTPADQEKIQLWEVVNQKEEVEQVATAIRQHVHQGARYKDILLLLGDVDSYKLQIGKIFDKYDIPYYFGKAEEMSHHPLVHFVESLERLRRYRFRAEDLLNLLKSGLYASISQKELDLFESYILFADMKGQAAFSRAFSVNGRADYDAEVIKEKRLVYDLTVLEPLRAKIMEPLNQLFKAGPQSGTALLEKFMAFLEAIDLPKNMEKMSRNLSEVEQEKEEQVWKSFTHLLENFHQIFGKEKLKMDDFLAILQAGMQASHYRTVPATVDVVNVKSYDLIEPHTAKYVYAIGMGQSNFPKVAKNTSLLTEEEMEKVNLVSASSSRFDLVSRENIKKNHAAMMSLLNSATEQLVISTPQIYNEGEDSLSPYIKILQKMGLKSEERGRIKTLSPQDIGHYKSLLSRLIESERPSLETEEWEGQRAFWTVLVRHLKKKLESQSIEIPTITGDIASKQLSDETLAALYPEDKPLNLSASSLTNFYNNQYLYFVRNVLRLREQESIHPTAFQHGLFLHRIFERVVMDQSELDFDQKVDKAILRTRDEAEFAMFYNQDADARYTEEVLDKIARSSATILRDNDLVEIDGQEKSFRQDKALVFDLQNGKSVHVNGTIDRLDTLQINQAVGVVDYKSSDQSFSVGDFYNGLKPQLVTYLAALQELDETKDKPVFGAMYLHLQDPIIKLKDTKNLEQLEGAANTSLVYKGLFLKEESLGLNHFYQTRNQLYTEDEFAVLLNHNQELYKQAAMDILAGRFAINPYTKDGRSVAGEQLKAITGFEADRHMGMARRLVKEAKRQDWMERMKGGQD.

It belongs to the helicase family. AddB/RexB type 2 subfamily. As to quaternary structure, heterodimer of AddA and RexB. The cofactor is Mg(2+).

Functionally, the heterodimer acts as both an ATP-dependent DNA helicase and an ATP-dependent, dual-direction single-stranded exonuclease. Recognizes the chi site generating a DNA molecule suitable for the initiation of homologous recombination. This subunit has 5' -&gt; 3' nuclease activity but not helicase activity. The sequence is that of ATP-dependent helicase/deoxyribonuclease subunit B from Streptococcus suis (strain 98HAH33).